We begin with the raw amino-acid sequence, 321 residues long: Ribonucleoside-diphosphate reductase small subunit (321 aa).

Residues aspartate 78, glutamate 108, and histidine 111 each coordinate Fe cation. Tyrosine 115 is an active-site residue. The helical transmembrane segment at 165–185 (ILMILIEGLFFASSFASIAYL) threads the bilayer. Glutamate 171, glutamate 205, and histidine 208 together coordinate Fe cation.

This sequence belongs to the ribonucleoside diphosphate reductase small chain family. As to quaternary structure, heterotetramer composed of a homodimer of the large subunit (R1) and a homodimer of the small subunit (R2). Larger multisubunit protein complex are also active, composed of (R1)n(R2)n. It depends on Fe cation as a cofactor.

The protein resides in the host membrane. It carries out the reaction a 2'-deoxyribonucleoside 5'-diphosphate + [thioredoxin]-disulfide + H2O = a ribonucleoside 5'-diphosphate + [thioredoxin]-dithiol. Functionally, ribonucleoside-diphosphate reductase holoenzyme provides the precursors necessary for viral DNA synthesis. Allows virus growth in non-dividing cells, as well as reactivation from latency in infected hosts. Catalyzes the biosynthesis of deoxyribonucleotides from the corresponding ribonucleotides. This chain is Ribonucleoside-diphosphate reductase small subunit, found in Equus caballus (Horse).